The primary structure comprises 400 residues: Na(+)/H(+) antiporter NhaA (400 aa).

The next 12 membrane-spanning stretches (helical) occupy residues 26–46 (AGGILLLFSAVVAMLLANSPL), 71–91 (LIHWINDGFMAVFFVLVGMEV), 107–127 (IFPAIAAIGGMVIPAVVYWFI), 137–157 (GWAIPMATDIAFALGIMALLS), 166–186 (IFLLALAIIDDLGAIVVIALF), 189–209 (HGLSVQALIFSAVAIIALILL), 212–232 (FKVSALCAYMVVGAILWASVL), 233–253 (KSGVHATLAGVIIGFSIPLKG), 273–293 (FVILPLFAFANAGVSFAGIDV), 299–319 (PLLLAIASGLIIGKPVGIFGF), 340–360 (IFAVAVLCGIGFTMSMFLASL), and 373–393 (LSRLGILFGSTVSAILGYLFL).

The protein belongs to the NhaA Na(+)/H(+) (TC 2.A.33) antiporter family.

Its subcellular location is the cell inner membrane. It carries out the reaction Na(+)(in) + 2 H(+)(out) = Na(+)(out) + 2 H(+)(in). Na(+)/H(+) antiporter that extrudes sodium in exchange for external protons. This Haemophilus influenzae (strain PittEE) protein is Na(+)/H(+) antiporter NhaA.